Consider the following 315-residue polypeptide: Methionine import ATP-binding protein MetN (315 aa).

Residues 2 to 219 form the ABC transporter domain; that stretch reads IEIEKVCVDF…PQHAFTQQLV (218 aa). 16–23 provides a ligand contact to ATP; that stretch reads GTSGAGKS.

It belongs to the ABC transporter superfamily. Methionine importer (TC 3.A.1.24) family. In terms of assembly, the complex is composed of two ATP-binding proteins (MetN), two transmembrane proteins (MetI) and a solute-binding protein (MetQ).

The protein localises to the cell inner membrane. It catalyses the reaction L-methionine(out) + ATP + H2O = L-methionine(in) + ADP + phosphate + H(+). It carries out the reaction D-methionine(out) + ATP + H2O = D-methionine(in) + ADP + phosphate + H(+). Its function is as follows. Part of the ABC transporter complex MetNIQ involved in methionine import. Responsible for energy coupling to the transport system. This chain is Methionine import ATP-binding protein MetN, found in Salmonella enteritidis.